The following is a 118-amino-acid chain: C-type natriuretic peptide 2 (118 aa).

An N-terminal signal peptide occupies residues 1–22; sequence MHFCHIVGWGLVLAVLYLRTEA. Positions 23–96 are excised as a propeptide; it reads KPVAQAHQKS…SRKIKGINKK (74 aa). Cys-102 and Cys-118 form a disulfide bridge.

The protein belongs to the natriuretic peptide family.

The protein localises to the secreted. Functionally, exhibits natriuretic and vasodepressor activity. Has a cGMP-stimulating activity. The chain is C-type natriuretic peptide 2 from Aquarana catesbeiana (American bullfrog).